A 178-amino-acid polypeptide reads, in one-letter code: ATP-dependent protease subunit HslV (178 aa).

Residue Thr-7 is part of the active site. Residues Gly-162, Cys-165, and Thr-168 each contribute to the Na(+) site.

Belongs to the peptidase T1B family. HslV subfamily. As to quaternary structure, a double ring-shaped homohexamer of HslV is capped on each side by a ring-shaped HslU homohexamer. The assembly of the HslU/HslV complex is dependent on binding of ATP.

Its subcellular location is the cytoplasm. The catalysed reaction is ATP-dependent cleavage of peptide bonds with broad specificity.. With respect to regulation, allosterically activated by HslU binding. Its function is as follows. Protease subunit of a proteasome-like degradation complex believed to be a general protein degrading machinery. In Sulfurihydrogenibium sp. (strain YO3AOP1), this protein is ATP-dependent protease subunit HslV.